A 1453-amino-acid polypeptide reads, in one-letter code: Scavenger receptor cysteine-rich type 1 protein M160 (1453 aa).

Residues 1–40 (MMLPQNSWHIDFGRCCCHQNLFSAVVTCILLLNSCFLISS) form the signal peptide. Residues 41–1359 (FNGTDLELRL…LKSLNASSGH (1319 aa)) lie on the Extracellular side of the membrane. N-linked (GlcNAc...) asparagine glycans are attached at residues Asn42, Asn78, Asn120, and Asn161. SRCR domains lie at 48–148 (LRLV…VNCY), 155–255 (LRLV…LTCY), 262–362 (LRLV…VICS), 369–469 (LRLA…VICS), 476–576 (LRLV…VTCS), 583–683 (LRLV…VICS), 690–790 (LRLV…LICS), 795–895 (PRLV…VVCS), and 900–1000 (VRLV…VICT). 3 disulfide bridges follow: Cys73-Cys137, Cys86-Cys147, and Cys117-Cys127. 6 cysteine pairs are disulfide-bonded: Cys180-Cys244, Cys193-Cys254, Cys224-Cys234, Cys287-Cys351, Cys300-Cys361, and Cys331-Cys341. N-linked (GlcNAc...) asparagine glycans are attached at residues Asn334, Asn377, Asn441, Asn548, and Asn637. 18 disulfide bridges follow: Cys394/Cys458, Cys407/Cys468, Cys438/Cys448, Cys501/Cys565, Cys514/Cys575, Cys545/Cys555, Cys608/Cys672, Cys621/Cys682, Cys652/Cys662, Cys715/Cys779, Cys728/Cys789, Cys759/Cys769, Cys820/Cys884, Cys833/Cys894, Cys864/Cys874, Cys925/Cys989, Cys938/Cys999, and Cys969/Cys979. N-linked (GlcNAc...) asparagine glycans are attached at residues Asn972, Asn1013, Asn1084, and Asn1104. SRCR domains follow at residues 1036–1136 (LRLV…VICS), 1141–1243 (LRLY…ITCE), and 1246–1346 (IRVR…VRCS). Cystine bridges form between Cys1061/Cys1125, Cys1074/Cys1135, and Cys1105/Cys1115. N-linked (GlcNAc...) asparagine glycosylation is found at Asn1161 and Asn1171. 5 disulfide bridges follow: Cys1181–Cys1242, Cys1212–Cys1222, Cys1271–Cys1335, Cys1284–Cys1345, and Cys1315–Cys1325. Asn1318 and Asn1354 each carry an N-linked (GlcNAc...) asparagine glycan. Residues 1360-1380 (LALILSSIFGLLLLVLFILFL) form a helical membrane-spanning segment. Topologically, residues 1381 to 1453 (TWCRVQKQKH…GVLPASEATK (73 aa)) are cytoplasmic. The segment covering 1418-1435 (EDPHGTRTSDDTPNHGCE) has biased composition (basic and acidic residues). Positions 1418–1453 (EDPHGTRTSDDTPNHGCEDASDTSLLGVLPASEATK) are disordered.

As to expression, isoform 1 is highly expressed in the spleen, lymph nodes, thymus, and fetal liver and weakly expressed in bone marrow and no expression was found in peripheral blood leukocytes. Isoform 1 expression is restricted to the monocyte and macrophage cell lines. Isoform 2 is only expressed in spleen.

It localises to the cell membrane. Its subcellular location is the secreted. The sequence is that of Scavenger receptor cysteine-rich type 1 protein M160 (CD163L1) from Homo sapiens (Human).